The primary structure comprises 515 residues: Cytochrome P450 monooxygenase nsrP (515 aa).

Residues 20–40 (FGTAAFLAVLLSALAFLSYTP) form a helical membrane-spanning segment. N84, N406, and N411 each carry an N-linked (GlcNAc...) asparagine glycan. C452 is a binding site for heme.

It belongs to the cytochrome P450 family. Requires heme as cofactor.

The protein localises to the membrane. It participates in secondary metabolite biosynthesis. Its function is as follows. Cytochrome P450 monooxygenase; part of the gene cluster that mediates the biosynthesis of the tetrahydroxanthone dimer neosartorin, which exhibits antibacterial activity. The two different monomeric units appear to be synthesized by the same set of enzymes, among which the Baeyer-Villiger monooxygenase nsrF is the key enzyme for the divergence of the biosynthetic routes. The pathway begins with the synthesis of atrochrysone thioester by the polyketide synthase nsrB. The atrochrysone carboxyl ACP thioesterase nsrC then breaks the thioester bond and releases the atrochrysone carboxylic acid from AacuL. Atrochrysone carboxylic acid is decarboxylated by the decarboxylase nsrE, and oxidized by the anthrone oxygenase nsrD to yield emodin. Emodin is then reduced to emodin hydroquinone by the oxidoreductase nsrR. A-ring reduction by the short chain dehydrogenase nsrJ, dehydration by the scytalone dehydratase-like protein nsrI and probable spontaneous re-oxidation, results in overall deoxygenation to chrysophanol. The Baeyer-Villiger monooxygenase nsrF accepts chrysophanol as a substrate to insert one oxygen atom at two different positions to yield the precursors of both monomric units. NsrF is promiscuous/flexible in interacting with the 2 (non methylated and methylated) aromatic rings of chrysophanol, thus diverging the biosynthetic pathway at this point. After the hydrolysis of the lactones, methylesterification by the methyltransferase nsrG yields respectively moniliphenone and 2,2',6'-trihydroxy-4-methyl-6-methoxya-cyldiphenylmethanone. The next steps are the hydroxylation by the FAD-dependent monooxygenase nsrK, followed by isomerization by the monooxygenase nsrQ. The short chain dehydrogenase/reductase nsrO then catalyzes the C-5 ketoreduction to give the xanthone skeleton of blennolide C and 5-acetylblennolide A. The acetyltransferase nsrL has a strict substrate specificity and uses only blennolide A but not blennolide C to yield 5-acetylblennolide A as the single-acetylated product. In the final step of the biosynthesis, the heterodimerization of the 2 xanthones, blennolide C and 5-acetylblennolide A, is catalyzed by the cytochrome P450 monooxygenase nsrP. NsrP can utilize at least three different xanthones as its substrates to perform the dimerization reaction. The sequence is that of Cytochrome P450 monooxygenase nsrP from Aspergillus novofumigatus (strain IBT 16806).